A 637-amino-acid polypeptide reads, in one-letter code: MGKKIRLTTAQALIKFLNQQYIHVDGEETPFVEGIFTIFGHGNVVGIGQALEQDAGHLKVFQGKNEQGMAHAAMAYSKQMLRRKIYAVSTSVGPGAANLVAAAGTALANNIPVLLIPADTFATRQPDPVLQQVEQEYSAAITTNDALKPVSRYWDRITRPEQLMSSLIRAFEVMTDPAKAGPATICISQDVEGEAYDFDESFFEKRVHYVDRKEPSERELKGAAELIKSSKKPLILVGGGAKYSGARDELIAMSEAYNIPLVETQAGKSTVEADFANNLGGMGITGTLAANKAARGADLIIGIGTRYTDFATSSKTAFDFDNAKFLNINVSRMQAYKLDAFQVVADAKVTLGKLHGLLEGYKSEFGSTIKELKDEWLAERDRLSKVTFKRENFTPEIKDHFSQDILNEYADVLQTELPQTTALLAINETVDPDSVVICSAGSLPGDLQRLWHSNVPNTYHLEYGYSCMGYEVSGTLGLKLAHPDREVYSLVGDGSFLMLHSELITAIQYNKKINVLLFDNSGFGCINNLQMDHGNGSYYCEFRTADNQILNVDYAKVAEGYGAKTYKANTIEELKAALEDAKKQDVSTLIEMKVLPKTMTDGYDSWWHVGVAEVSEQESVQKAYKAKEKMLESAKQY.

A thiamine diphosphate-binding site is contributed by E66. The segment at 442–522 (SLPGDLQRLW…INVLLFDNSG (81 aa)) is thiamine pyrophosphate binding. Mg(2+) contacts are provided by D493 and N520.

This sequence belongs to the TPP enzyme family. Mg(2+) is required as a cofactor. Thiamine diphosphate serves as cofactor.

The enzyme catalyses 3D-3,5/4-trihydroxycyclohexane-1,2-dione + H2O = 5-deoxy-D-glucuronate + H(+). It participates in polyol metabolism; myo-inositol degradation into acetyl-CoA; acetyl-CoA from myo-inositol: step 3/7. Involved in the cleavage of the C1-C2 bond of 3D-(3,5/4)-trihydroxycyclohexane-1,2-dione (THcHDO) to yield 5-deoxy-glucuronate (5DG). In Bacillus licheniformis (strain ATCC 14580 / DSM 13 / JCM 2505 / CCUG 7422 / NBRC 12200 / NCIMB 9375 / NCTC 10341 / NRRL NRS-1264 / Gibson 46), this protein is 3D-(3,5/4)-trihydroxycyclohexane-1,2-dione hydrolase.